The sequence spans 464 residues: MSTNGTLSKPEFPANAASKEYAASLDAADPFAGFREKFIIPSKANIASTKLAKPGLSSEPCIYFCGNSLGIQPKATQKYLEAQLDTWSSIGVCGHFTKIEDSPLKEWQNLAEQAAESMSKIVGAAPEEVAAMGTLTMNLHLLLASFFKPTATKRKILMDWKAFPSDHYAIESHLAWHHLDPKETMVLIGPDEGTYEIPTEKILSYIDQHADEAALILLPGIQYYTGQLFDIPKITEYAHSRGLIVGWDLAHAYANVPLKLHDWDVDFAAWCTYKYGNAGPGAMAGLFVHEKHGQVDYSEGEDAPKFRHRLTGWYGGDKSVRFKMDNKFKPIPGAGGYQISNPSAIDLACLCAALSVFDETSIAELRKKSVLMTAYLEYLLLKDTTDESRQFQIITPSDPAARGAQLSLLLKPGLLHKVAHRLQEAGIICDKREPGVVRVAPVPLYNTFTEIWMFVQQLKAALEG.

Residues Leu-135, Thr-136, Phe-163–Asp-166, Asp-248, His-251, and Tyr-273 each bind pyridoxal 5'-phosphate. Position 274 is an N6-(pyridoxal phosphate)lysine (Lys-274). Pyridoxal 5'-phosphate is bound by residues Trp-313 and Asn-341.

Belongs to the kynureninase family. In terms of assembly, homodimer. Pyridoxal 5'-phosphate serves as cofactor.

It is found in the cytoplasm. The enzyme catalyses L-kynurenine + H2O = anthranilate + L-alanine + H(+). It catalyses the reaction 3-hydroxy-L-kynurenine + H2O = 3-hydroxyanthranilate + L-alanine + H(+). Its pathway is amino-acid degradation; L-kynurenine degradation; L-alanine and anthranilate from L-kynurenine: step 1/1. It functions in the pathway cofactor biosynthesis; NAD(+) biosynthesis; quinolinate from L-kynurenine: step 2/3. Functionally, catalyzes the cleavage of L-kynurenine (L-Kyn) and L-3-hydroxykynurenine (L-3OHKyn) into anthranilic acid (AA) and 3-hydroxyanthranilic acid (3-OHAA), respectively. This chain is Kynureninase 2 (bna5-2), found in Aspergillus fumigatus (strain CBS 144.89 / FGSC A1163 / CEA10) (Neosartorya fumigata).